The primary structure comprises 319 residues: Phosphatidylglycerol--prolipoprotein diacylglyceryl transferase (319 aa).

Transmembrane regions (helical) follow at residues 21–41 (PIPI…AIWL), 50–70 (GGNP…GIIG), and 98–118 (NGGL…AVFF). Arg-144 serves as a coordination point for a 1,2-diacyl-sn-glycero-3-phospho-(1'-sn-glycerol). A run of 2 helical transmembrane segments spans residues 191–211 (VHPT…LLMW) and 254–274 (INTI…FLLK). A disordered region spans residues 295-319 (AVASPDGKPLPKAGEGIDGETPSTR).

The protein belongs to the Lgt family.

The protein resides in the cell membrane. It carries out the reaction L-cysteinyl-[prolipoprotein] + a 1,2-diacyl-sn-glycero-3-phospho-(1'-sn-glycerol) = an S-1,2-diacyl-sn-glyceryl-L-cysteinyl-[prolipoprotein] + sn-glycerol 1-phosphate + H(+). Its pathway is protein modification; lipoprotein biosynthesis (diacylglyceryl transfer). In terms of biological role, catalyzes the transfer of the diacylglyceryl group from phosphatidylglycerol to the sulfhydryl group of the N-terminal cysteine of a prolipoprotein, the first step in the formation of mature lipoproteins. This is Phosphatidylglycerol--prolipoprotein diacylglyceryl transferase from Corynebacterium glutamicum (strain R).